The chain runs to 493 residues: Glutamyl-tRNA(Gln) amidotransferase subunit A (493 aa).

Active-site charge relay system residues include Lys-79 and Ser-159. Catalysis depends on Ser-183, which acts as the Acyl-ester intermediate.

This sequence belongs to the amidase family. GatA subfamily. As to quaternary structure, heterotrimer of A, B and C subunits.

It catalyses the reaction L-glutamyl-tRNA(Gln) + L-glutamine + ATP + H2O = L-glutaminyl-tRNA(Gln) + L-glutamate + ADP + phosphate + H(+). Allows the formation of correctly charged Gln-tRNA(Gln) through the transamidation of misacylated Glu-tRNA(Gln) in organisms which lack glutaminyl-tRNA synthetase. The reaction takes place in the presence of glutamine and ATP through an activated gamma-phospho-Glu-tRNA(Gln). The protein is Glutamyl-tRNA(Gln) amidotransferase subunit A of Sinorhizobium fredii (strain NBRC 101917 / NGR234).